The following is a 1403-amino-acid chain: Centrosomal protein of 162 kDa (1403 aa).

The tract at residues 20-46 (LSDDSFENSNKTPRQPNEDNKEMKKKD) is disordered. Over residues 35 to 46 (PNEDNKEMKKKD) the composition is skewed to basic and acidic residues. Phosphoserine occurs at positions 160 and 163. Disordered regions lie at residues 169-243 (LHRY…MLAN), 256-292 (VGLS…SSGD), 306-348 (SLGD…ESDL), and 453-606 (NPSL…GGNR). Positions 178–208 (PAEDGCENESEQEELPETYSDDFEDAEDADD) are enriched in acidic residues. Positions 210-238 (LITKDEETHPKENSESGKDSFPKQEEEKT) are enriched in basic and acidic residues. The span at 485-500 (PCKKARSTPSLPKRKP) shows a compositional bias: basic residues. 2 stretches are compositionally biased toward basic and acidic residues: residues 526–536 (LEKKTSKDNTK) and 571–585 (PHRE…RPED). A coiled-coil region spans residues 614-1124 (KRAQDAEEKW…QKERRMMLSR (511 aa)). The segment at 1126–1147 (IPRSREETAAKRLKKDPNRGHG) is disordered. Over residues 1128-1144 (RSREETAAKRLKKDPNR) the composition is skewed to basic and acidic residues. Positions 1174–1386 (EENYRLRSEL…LDVLRELHRQ (213 aa)) form a coiled coil.

It belongs to the CEP162 family. As to quaternary structure, interacts with CPNE4. Interacts with alpha-tubulin. Interacts with CEP290.

It is found in the cytoplasm. The protein resides in the cytoskeleton. It localises to the microtubule organizing center. The protein localises to the centrosome. Its subcellular location is the centriole. It is found in the spindle. The protein resides in the nucleus. Required to promote assembly of the transition zone in primary cilia. Acts by specifically recognizing and binding the axonemal microtubule. Localizes to the distal ends of centrioles before ciliogenesis and directly binds to axonemal microtubule, thereby promoting and restricting transition zone formation specifically at the cilia base. Required to mediate CEP290 association with microtubules. In Mus musculus (Mouse), this protein is Centrosomal protein of 162 kDa (Cep162).